Reading from the N-terminus, the 223-residue chain is Small ribosomal subunit protein uS3 (223 aa).

Residues 39 to 115 form the KH type-2 domain; it reads IRKYIEKNLA…RVFINIVEIK (77 aa).

This sequence belongs to the universal ribosomal protein uS3 family. Part of the 30S ribosomal subunit. Forms a tight complex with proteins S10 and S14.

In terms of biological role, binds the lower part of the 30S subunit head. Binds mRNA in the 70S ribosome, positioning it for translation. This is Small ribosomal subunit protein uS3 from Leuconostoc citreum (strain KM20).